The chain runs to 194 residues: Peptidyl-tRNA hydrolase (194 aa).

Tyr17 contributes to the tRNA binding site. Residue His22 is the Proton acceptor of the active site. Residues Tyr68, Asn70, and Asn116 each contribute to the tRNA site.

The protein belongs to the PTH family. Monomer.

The protein localises to the cytoplasm. It carries out the reaction an N-acyl-L-alpha-aminoacyl-tRNA + H2O = an N-acyl-L-amino acid + a tRNA + H(+). Functionally, hydrolyzes ribosome-free peptidyl-tRNAs (with 1 or more amino acids incorporated), which drop off the ribosome during protein synthesis, or as a result of ribosome stalling. In terms of biological role, catalyzes the release of premature peptidyl moieties from peptidyl-tRNA molecules trapped in stalled 50S ribosomal subunits, and thus maintains levels of free tRNAs and 50S ribosomes. The sequence is that of Peptidyl-tRNA hydrolase from Pseudoalteromonas translucida (strain TAC 125).